The following is a 233-amino-acid chain: B-cell lymphoma/leukemia 10 (233 aa).

An N-acetylmethionine modification is found at Met1. The CARD domain occupies Leu13–Asp101. Glycyl lysine isopeptide (Lys-Gly) (interchain with G-Cter in ubiquitin) cross-links involve residues Lys17, Lys31, and Lys63. Ser138 bears the Phosphoserine mark. Residues Phe187–Gln233 form a disordered region. Positions Pro195–Pro205 are enriched in pro residues.

In terms of assembly, homomultimer; homooligomerized following recruitment by CARD domain-containing proteins that form a nucleating helical template that recruits BCL10 via CARD-CARD interaction. Self-associates by CARD-CARD interaction and interacts with other CARD-proteins such as CARD9, CARD10, CARD11 and CARD14. Forms a complex with CARD14 and MALT1; resulting in the formation of a CBM (CARD14-BCL10-MALT1) complex. Forms a complex with CARD11 and MALT1; resulting in the formation of a CBM (CARD11-BCL10-MALT1) complex. Forms a complex with CARD9 and MALT1; resulting in the formation of a CBM (CARD9-BCL10-MALT1) complex. Found in a membrane raft complex, at least composed of BCL10, CARD11, DPP4 and IKBKB. Binds caspase-9 with its C-terminal domain. Interacts with TRAF2 and BIRC2/c-IAP2. Interacts with PELI2 and SOCS3; these interactions may be mutually exclusive. Post-translationally, phosphorylated. Phosphorylation results in dissociation from TRAF2 and binding to BIRC2/c-IAP2. Phosphorylated by IKBKB/IKKB. In terms of processing, ubiquitinated via both 'Lys-63'-linked and linear ('Met-1'-linked) polyubiquitin chains in response to T-cell receptor (TCR) activation. Ubiquitination is recognized by IKBKG/NEMO, the regulatory subunit of I-kappa-B kinase (IKK), and is required for TCR-induced NF-kappa-B activation. Linear ubiquitination at Lys-17, Lys-31 and Lys-63 is mediated by RNF31/HOIP; linear ubiquitination is recognized with much higher affinity than 'Lys-63'-linked ubiquitin by IKBKG/NEMO. CARD11 is required for linear ubiquitination by HOIP by promoting the targeting of BCL10 to RNF31/HOIP. Proteolytically cleaved by MALT1; required for T-cell activation. Ubiquitous.

It is found in the cytoplasm. It localises to the perinuclear region. The protein resides in the membrane raft. Functionally, plays a key role in both adaptive and innate immune signaling by bridging CARD domain-containing proteins to immune activation. Acts by channeling adaptive and innate immune signaling downstream of CARD domain-containing proteins CARD9, CARD11 and CARD14 to activate NF-kappa-B and MAP kinase p38 (MAPK11, MAPK12, MAPK13 and/or MAPK14) pathways which stimulate expression of genes encoding pro-inflammatory cytokines and chemokines. Recruited by activated CARD domain-containing proteins: homooligomerized CARD domain-containing proteins form a nucleating helical template that recruits BCL10 via CARD-CARD interaction, thereby promoting polymerization of BCL10, subsequent recruitment of MALT1 and formation of a CBM complex. This leads to activation of NF-kappa-B and MAP kinase p38 (MAPK11, MAPK12, MAPK13 and/or MAPK14) pathways which stimulate expression of genes encoding pro-inflammatory cytokines and chemokines. Activated by CARD9 downstream of C-type lectin receptors; CARD9-mediated signals are essential for antifungal immunity. Activated by CARD11 downstream of T-cell receptor (TCR) and B-cell receptor (BCR). Promotes apoptosis, pro-caspase-9 maturation and activation of NF-kappa-B via NIK and IKK. The sequence is that of B-cell lymphoma/leukemia 10 from Homo sapiens (Human).